Consider the following 266-residue polypeptide: Small ribosomal subunit protein uS3 (266 aa).

The region spanning 39 to 107 (VREYLKKKLK…PVHVNIEEIR (69 aa)) is the KH type-2 domain. Residues 218-266 (EVAEDKRPRRNARPGDRRPRRDGEGGAPGARRGAPRRGAGKPEDGKTGE) are disordered. 2 stretches are compositionally biased toward basic and acidic residues: residues 230 to 241 (RPGDRRPRRDGE) and 257 to 266 (GKPEDGKTGE).

Belongs to the universal ribosomal protein uS3 family. In terms of assembly, part of the 30S ribosomal subunit. Forms a tight complex with proteins S10 and S14.

Its function is as follows. Binds the lower part of the 30S subunit head. Binds mRNA in the 70S ribosome, positioning it for translation. The chain is Small ribosomal subunit protein uS3 from Burkholderia ambifaria (strain MC40-6).